Reading from the N-terminus, the 426-residue chain is Bone morphogenetic protein 7 (426 aa).

A signal peptide spans Met-1–Ser-22. The propeptide occupies Ser-23–Arg-282. 3 N-linked (GlcNAc...) asparagine glycosylation sites follow: Asn-177, Asn-307, and Asn-367. 3 disulfides stabilise this stretch: Cys-325–Cys-391, Cys-354–Cys-423, and Cys-358–Cys-425.

This sequence belongs to the TGF-beta family. Homodimer; disulfide-linked. Interacts with twsg1.

Its subcellular location is the secreted. Functionally, growth factor of the TGF-beta superfamily that plays important role in various biological processes, including embryogenesis, hematopoiesis, neurogenesis and skeletal morphogenesis. Initiates the canonical BMP signaling cascade by associating with type I receptor ACVR1 and type II receptor ACVR2A. Once all three components are bound together in a complex at the cell surface, ACVR2A phosphorylates and activates ACVR1. In turn, ACVR1 propagates signal by phosphorylating SMAD1/5/8 that travel to the nucleus and act as activators and repressors of transcription of target genes. The polypeptide is Bone morphogenetic protein 7 (bmp7) (Xenopus laevis (African clawed frog)).